We begin with the raw amino-acid sequence, 220 residues long: Response regulator ArlR (220 aa).

Positions K3–L116 constitute a Response regulatory domain. D52 carries the 4-aspartylphosphate modification. The segment at residues K122–Q220 is a DNA-binding region (ompR/PhoB-type).

Post-translationally, phosphorylated by ArlS.

Its subcellular location is the cytoplasm. Functionally, member of the two-component regulatory system ArlS/ArlR. The polypeptide is Response regulator ArlR (arlR) (Staphylococcus saprophyticus subsp. saprophyticus (strain ATCC 15305 / DSM 20229 / NCIMB 8711 / NCTC 7292 / S-41)).